The chain runs to 299 residues: 4-hydroxybenzoate octaprenyltransferase (299 aa).

Helical transmembrane passes span 33–53 (VGFLLLLWPTWWALWLAAGGV), 56–76 (WWTLCVFTTGIWLTRSAGCVI), 107–127 (LLMFATLMLIAFGLVLTMNQL), 151–171 (LPQVYLGLAFGWGIPMAFAAI), 180–200 (WLLYVANILWTTAYDTWCAMV), 214–234 (AILFADLDLTVQGVLYTLMLF), 247–267 (HTYWISLIAAVALIGYQFIIA), and 278–298 (AFMHNNWVGMTIFAGIALATT).

The protein belongs to the UbiA prenyltransferase family. It depends on Mg(2+) as a cofactor.

The protein localises to the cell inner membrane. It catalyses the reaction all-trans-octaprenyl diphosphate + 4-hydroxybenzoate = 4-hydroxy-3-(all-trans-octaprenyl)benzoate + diphosphate. It functions in the pathway cofactor biosynthesis; ubiquinone biosynthesis. Functionally, catalyzes the prenylation of para-hydroxybenzoate (PHB) with an all-trans polyprenyl group. Mediates the second step in the final reaction sequence of ubiquinone-8 (UQ-8) biosynthesis, which is the condensation of the polyisoprenoid side chain with PHB, generating the first membrane-bound Q intermediate 3-octaprenyl-4-hydroxybenzoate. The chain is 4-hydroxybenzoate octaprenyltransferase from Xylella fastidiosa (strain 9a5c).